We begin with the raw amino-acid sequence, 1957 residues long: Chromatin modification-related protein EAF1 A (1957 aa).

Disordered stretches follow at residues 108-208, 261-287, 323-373, and 449-469; these read ASPH…TDLV, NRVS…GSKT, GGSP…SHAN, and NQSH…ETEK. A compositionally biased stretch (basic and acidic residues) spans 140 to 151; the sequence is SENKSVEGERNL. Composition is skewed to polar residues over residues 261 to 270, 333 to 342, and 355 to 372; these read NRVSSNSLNT, GQKNSSTQLN, and TNRG…SSHA. The 79-residue stretch at 563–641 folds into the HSA domain; that stretch reads CGTAPVEVRE…LSNAILQFWS (79 aa). Disordered stretches follow at residues 833 to 909 and 928 to 950; these read GSNS…AVQK and AETS…DQTW. The segment covering 884–898 has biased composition (polar residues); it reads TDASSGDTSSFQDEY. Residues 1049–1105 enclose the SANT domain; it reads SGNPWSLFEDQALVVLVHDMGPNWELISDAMNSTLKIKCIYRNPTECKDRHKILMDK. 7 disordered regions span residues 1107–1131, 1282–1314, 1344–1367, 1449–1644, 1687–1768, 1804–1840, and 1876–1957; these read AGDG…PGIP, TPVL…GLQS, LSGR…DRGH, QGNS…QQLN, PVRP…IAPA, ELSK…PQAS, and SSNT…TKVE. Composition is skewed to polar residues over residues 1116–1125, 1290–1314, 1344–1358, 1459–1472, 1479–1492, and 1501–1510; these read DSGNSQSYPS, AHPS…GLQS, LSGR…STPA, SNLS…TTPV, LSQQ…SHVL, and QSPSQATGAQ. Composition is skewed to low complexity over residues 1523 to 1534 and 1545 to 1562; these read QRYLQQQQQQQQ and VQQP…NSPQ. A compositionally biased stretch (pro residues) spans 1563-1579; sequence TQPPVSPQPLSMPPVSP. Polar residues-rich tracts occupy residues 1582–1595, 1604–1618, 1635–1644, 1691–1722, and 1734–1758; these read NINA…QKSQ, SPQS…QAGK, RQPTQGQQLN, DQQS…QQLP, and QQQM…CNIL. The span at 1759 to 1768 shows a compositional bias: low complexity; it reads STSSPSIAPA. The span at 1805–1815 shows a compositional bias: basic and acidic residues; it reads LSKKSQAERMP. Composition is skewed to polar residues over residues 1819–1832 and 1876–1894; these read QSVT…SMGT and SSNT…NQGL. Basic and acidic residues-rich tracts occupy residues 1913–1922 and 1932–1942; these read SEEKRPKLPE and LASEEQPHLEE.

This sequence belongs to the EAF1 family. Component of the NuA4 histone acetyltransferase complex. Interacts with ARP4 and SWC4, and (via HSA domain) with TAF14 and TAF14B. As to expression, expressed in leaves.

Its subcellular location is the nucleus. Its function is as follows. Component of the NuA4 histone acetyltransferase complex which is involved in transcriptional activation of selected genes principally by acetylation of nucleosomal histone H4 and H2A. The polypeptide is Chromatin modification-related protein EAF1 A (EAF1A) (Arabidopsis thaliana (Mouse-ear cress)).